The chain runs to 88 residues: Potassium channel toxin MeuTXKbeta3-meucin-24 (88 aa).

Residues 1-22 (MMKQQFFLFLAVIVMISSVIEA) form the signal peptide. Positions 55–88 (EYACPVIEKWCEDHCQAKNAIGRCENTECKCLSK) constitute a BetaSPN-type CS-alpha/beta domain. Cystine bridges form between Cys-58-Cys-78, Cys-65-Cys-83, and Cys-69-Cys-85.

This sequence belongs to the long chain scorpion toxin family. Class 2 subfamily. As to expression, expressed by the venom gland.

The protein localises to the secreted. Inhibits voltage-gated potassium channels. Its function is as follows. The synthetic meucin-24 inhibits the development of P.berghei ookinetes, kills intraerythrocytic P.falciparum, and is cytotoxic to the Drosophila S2 cells at micromolar concentrations. No antibacterial, antifungal and hemolytic activities have been found at micromolar concentrations. The protein is Potassium channel toxin MeuTXKbeta3-meucin-24 of Mesobuthus eupeus (Lesser Asian scorpion).